Reading from the N-terminus, the 190-residue chain is Large ribosomal subunit protein uL5 (190 aa).

It belongs to the universal ribosomal protein uL5 family. As to quaternary structure, part of the 50S ribosomal subunit; part of the 5S rRNA/L5/L18/L25 subcomplex. Contacts the 5S rRNA and the P site tRNA. Forms a bridge to the 30S subunit in the 70S ribosome.

This is one of the proteins that bind and probably mediate the attachment of the 5S RNA into the large ribosomal subunit, where it forms part of the central protuberance. In the 70S ribosome it contacts protein S13 of the 30S subunit (bridge B1b), connecting the 2 subunits; this bridge is implicated in subunit movement. Contacts the P site tRNA; the 5S rRNA and some of its associated proteins might help stabilize positioning of ribosome-bound tRNAs. The sequence is that of Large ribosomal subunit protein uL5 from Corynebacterium efficiens (strain DSM 44549 / YS-314 / AJ 12310 / JCM 11189 / NBRC 100395).